The following is a 318-amino-acid chain: MKLSEIAEFLSLEYKGEDIEISALNSLLKANFAELTYCDGEKNTKDIPHTGAAAILVSKEYENLVPKDTKVLITQSPHLSFAFLSKLFAKPLINTAKEKVQNIAKSARIMPNVYIGDNVNIGENVIIMAGAYIGDNVSIGDESIIHPNVVIYNDTKIGKKCHLLANCVIGSDGFGYAHNKNGEHYKIYHNGNVILEDFVEVGACTTIDRAVFDSTIIKAGTKVDNLVQIGHNCNIGQNCIIVAQTGISGSSELGRNVIMGGQSATSGHLKIGDFSTIAARGGVSKNLEGGRVYGGFPIMLQKDWLKLQAKIAMKFKKD.

Histidine 231 acts as the Proton acceptor in catalysis.

It belongs to the transferase hexapeptide repeat family. LpxD subfamily. As to quaternary structure, homotrimer.

It carries out the reaction a UDP-3-O-[(3R)-3-hydroxyacyl]-alpha-D-glucosamine + a (3R)-hydroxyacyl-[ACP] = a UDP-2-N,3-O-bis[(3R)-3-hydroxyacyl]-alpha-D-glucosamine + holo-[ACP] + H(+). It participates in bacterial outer membrane biogenesis; LPS lipid A biosynthesis. Functionally, catalyzes the N-acylation of UDP-3-O-acylglucosamine using 3-hydroxyacyl-ACP as the acyl donor. Is involved in the biosynthesis of lipid A, a phosphorylated glycolipid that anchors the lipopolysaccharide to the outer membrane of the cell. The sequence is that of UDP-3-O-acylglucosamine N-acyltransferase from Campylobacter jejuni subsp. doylei (strain ATCC BAA-1458 / RM4099 / 269.97).